A 345-amino-acid chain; its full sequence is Fe(3+) ions import ATP-binding protein FbpC (345 aa).

Residues 3–233 (LSLKAATVRF…PADEFVARFL (231 aa)) form the ABC transporter domain. 35–42 (GPSGSGKS) lines the ATP pocket.

This sequence belongs to the ABC transporter superfamily. Fe(3+) ion importer (TC 3.A.1.10) family. In terms of assembly, the complex is composed of two ATP-binding proteins (FbpC), two transmembrane proteins (FbpB) and a solute-binding protein (FbpA).

Its subcellular location is the cell membrane. It carries out the reaction Fe(3+)(out) + ATP + H2O = Fe(3+)(in) + ADP + phosphate + H(+). Its function is as follows. Part of the ABC transporter complex FbpABC involved in Fe(3+) ions import. Responsible for energy coupling to the transport system. The protein is Fe(3+) ions import ATP-binding protein FbpC of Streptomyces avermitilis (strain ATCC 31267 / DSM 46492 / JCM 5070 / NBRC 14893 / NCIMB 12804 / NRRL 8165 / MA-4680).